The primary structure comprises 302 residues: 1D-myo-inositol 2-acetamido-2-deoxy-alpha-D-glucopyranoside deacetylase (302 aa).

3 residues coordinate Zn(2+): histidine 13, aspartate 16, and histidine 155.

It belongs to the MshB deacetylase family. The cofactor is Zn(2+).

The enzyme catalyses 1D-myo-inositol 2-acetamido-2-deoxy-alpha-D-glucopyranoside + H2O = 1D-myo-inositol 2-amino-2-deoxy-alpha-D-glucopyranoside + acetate. Catalyzes the deacetylation of 1D-myo-inositol 2-acetamido-2-deoxy-alpha-D-glucopyranoside (GlcNAc-Ins) in the mycothiol biosynthesis pathway. The protein is 1D-myo-inositol 2-acetamido-2-deoxy-alpha-D-glucopyranoside deacetylase of Nocardioides sp. (strain ATCC BAA-499 / JS614).